The sequence spans 234 residues: MSNHQKRLSVPNSWPVERKTATFTVKAGAGPHGESGVPLLIVLRDVLGYADNRKEARYALNEDNVLINGKAISDEERPVGMFDILAFTEREEYYRVFPGEGGRLALTAIDPDAAQSKLGKIVTKTHVSGGDVQLGLHDGETLIVEDDQTYDAGDSIVVGNEDGEVVAHFEYEEGALVTAVDGAHAGEVGEVEEIQVTPGSAQNNVIVSQDEGEGFETVEEYVVVIDENFTGDDE.

In terms of domain architecture, S4 RNA-binding spans 37–99; that stretch reads VPLLIVLRDV…REEYYRVFPG (63 aa).

It belongs to the eukaryotic ribosomal protein eS4 family.

This Haloarcula marismortui (strain ATCC 43049 / DSM 3752 / JCM 8966 / VKM B-1809) (Halobacterium marismortui) protein is Small ribosomal subunit protein eS4 (rps4e).